Reading from the N-terminus, the 131-residue chain is UPF0102 protein YraN (131 aa).

Positions M1–T19 are enriched in polar residues. The segment at M1–G20 is disordered.

It belongs to the UPF0102 family.

The chain is UPF0102 protein YraN from Escherichia coli (strain 55989 / EAEC).